The chain runs to 335 residues: Glyceraldehyde-3-phosphate dehydrogenase, cytosolic (335 aa).

Residues R13–I14, D35, and R80 each bind NAD(+). Residues S151–T153, T182, T211–G212, and R234 contribute to the D-glyceraldehyde 3-phosphate site. C152 acts as the Nucleophile in catalysis. Residue N316 participates in NAD(+) binding.

The protein belongs to the glyceraldehyde-3-phosphate dehydrogenase family. In terms of assembly, homotetramer.

It localises to the cytoplasm. The enzyme catalyses D-glyceraldehyde 3-phosphate + phosphate + NAD(+) = (2R)-3-phospho-glyceroyl phosphate + NADH + H(+). It functions in the pathway carbohydrate degradation; glycolysis; pyruvate from D-glyceraldehyde 3-phosphate: step 1/5. The sequence is that of Glyceraldehyde-3-phosphate dehydrogenase, cytosolic (GAPC) from Chondrus crispus (Carrageen Irish moss).